The primary structure comprises 300 residues: GTPase Era (300 aa).

Residues 4–172 (KSGFVALAGK…LEKIKEELPE (169 aa)) enclose the Era-type G domain. Residues 12-19 (GKPNVGKS) form a G1 region. 12–19 (GKPNVGKS) provides a ligand contact to GTP. A G2 region spans residues 38-42 (QTTRN). Positions 59–62 (DTPG) are G3. GTP-binding positions include 59 to 63 (DTPGI) and 121 to 124 (NKID). Positions 121 to 124 (NKID) are G4. The tract at residues 151 to 153 (ISA) is G5. Residues 195-280 (IREKIFHLTR…YLDLNVKVKE (86 aa)) form the KH type-2 domain.

It belongs to the TRAFAC class TrmE-Era-EngA-EngB-Septin-like GTPase superfamily. Era GTPase family. As to quaternary structure, monomer.

The protein resides in the cytoplasm. It is found in the cell inner membrane. An essential GTPase that binds both GDP and GTP, with rapid nucleotide exchange. Plays a role in 16S rRNA processing and 30S ribosomal subunit biogenesis and possibly also in cell cycle regulation and energy metabolism. This chain is GTPase Era, found in Thermotoga maritima (strain ATCC 43589 / DSM 3109 / JCM 10099 / NBRC 100826 / MSB8).